The chain runs to 558 residues: CTP synthase (558 aa).

Residues 1–267 (MAKFVFVTGG…CLEMLDVLNL (267 aa)) form an amidoligase domain region. Ser-13 contacts CTP. A UTP-binding site is contributed by Ser-13. ATP is bound by residues 14–19 (SIGKGI) and Asp-71. Mg(2+) contacts are provided by Asp-71 and Glu-141. CTP is bound by residues 148–150 (DIE), 188–193 (KTKPTQ), and Lys-224. UTP-binding positions include 188–193 (KTKPTQ) and Lys-224. The region spanning 292–534 (KVALVGKYVQ…IEAAQLRLPA (243 aa)) is the Glutamine amidotransferase type-1 domain. Residue Gly-354 coordinates L-glutamine. Cys-381 functions as the Nucleophile; for glutamine hydrolysis in the catalytic mechanism. L-glutamine is bound by residues 382 to 385 (LGMQ), Glu-405, and Arg-462. Catalysis depends on residues His-507 and Glu-509. A disordered region spans residues 536 to 558 (PDEALRRQSQTNISAQEQPSRIG). Polar residues predominate over residues 542–558 (RQSQTNISAQEQPSRIG).

Belongs to the CTP synthase family. As to quaternary structure, homotetramer.

It carries out the reaction UTP + L-glutamine + ATP + H2O = CTP + L-glutamate + ADP + phosphate + 2 H(+). The enzyme catalyses L-glutamine + H2O = L-glutamate + NH4(+). It catalyses the reaction UTP + NH4(+) + ATP = CTP + ADP + phosphate + 2 H(+). It participates in pyrimidine metabolism; CTP biosynthesis via de novo pathway; CTP from UDP: step 2/2. Allosterically activated by GTP, when glutamine is the substrate; GTP has no effect on the reaction when ammonia is the substrate. The allosteric effector GTP functions by stabilizing the protein conformation that binds the tetrahedral intermediate(s) formed during glutamine hydrolysis. Inhibited by the product CTP, via allosteric rather than competitive inhibition. In terms of biological role, catalyzes the ATP-dependent amination of UTP to CTP with either L-glutamine or ammonia as the source of nitrogen. Regulates intracellular CTP levels through interactions with the four ribonucleotide triphosphates. The chain is CTP synthase from Prochlorococcus marinus (strain MIT 9313).